A 299-amino-acid polypeptide reads, in one-letter code: Leucine zipper transcription factor-like protein 1 (299 aa).

The tract at residues 145–299 is interaction with BSS9; the sequence is GTTELLNKEI…KRLAKYESED (155 aa). The stretch at 145–299 forms a coiled coil; sequence GTTELLNKEI…KRLAKYESED (155 aa).

Belongs to the LZTFL1 family. In terms of assembly, self-associates. Interacts with BBS9; the interaction mediates the association of LZTL1 with the BBsome complex and regulates BBSome ciliary trafficking.

Its subcellular location is the cytoplasm. Functionally, regulates ciliary localization of the BBSome complex. Together with the BBSome complex, controls SMO ciliary trafficking and contributes to the sonic hedgehog (SHH) pathway regulation. May play a role in neurite outgrowth. May have tumor suppressor function. The chain is Leucine zipper transcription factor-like protein 1 (Lztfl1) from Rattus norvegicus (Rat).